Here is a 190-residue protein sequence, read N- to C-terminus: Large ribosomal subunit protein bL17 (190 aa).

The tract at residues 128–190 (KKTAGRKAAQ…VEENNEQNKA (63 aa)) is disordered. Over residues 143–154 (ALAPAEETPAPT) the composition is skewed to low complexity. Over residues 179–190 (LAVEENNEQNKA) the composition is skewed to acidic residues.

The protein belongs to the bacterial ribosomal protein bL17 family. Part of the 50S ribosomal subunit. Contacts protein L32.

In Salinispora tropica (strain ATCC BAA-916 / DSM 44818 / JCM 13857 / NBRC 105044 / CNB-440), this protein is Large ribosomal subunit protein bL17.